The following is a 352-amino-acid chain: Glycerol-3-phosphate dehydrogenase 1-like protein (352 aa).

13–18 contacts NAD(+); sequence GSGNWG. Lysine 123 is a substrate binding site. Alanine 156 is an NAD(+) binding site. Lysine 207 serves as the catalytic Proton acceptor. NAD(+) contacts are provided by arginine 272, lysine 299, and glutamine 301. 272 to 273 is a substrate binding site; it reads RN.

Belongs to the NAD-dependent glycerol-3-phosphate dehydrogenase family.

It localises to the cytoplasm. It carries out the reaction sn-glycerol 3-phosphate + NAD(+) = dihydroxyacetone phosphate + NADH + H(+). In terms of biological role, plays a role in regulating cardiac sodium current. This chain is Glycerol-3-phosphate dehydrogenase 1-like protein (gpd1l), found in Xenopus tropicalis (Western clawed frog).